A 93-amino-acid polypeptide reads, in one-letter code: C-C motif chemokine 3 (93 aa).

The signal sequence occupies residues 1-24 (MKVAVAALAVLLCAMALCSQVFSA). 2 disulfide bridges follow: Cys-34-Cys-58 and Cys-35-Cys-74.

Belongs to the intercrine beta (chemokine CC) family. In terms of assembly, self-associates. Also heterodimer of MIP-1-alpha(4-69) and MIP-1-beta(3-69). Interacts with CCR1.

It localises to the secreted. Monokine with inflammatory and chemokinetic properties. Binds to CCR1, CCR4 and CCR5. One of the major HIV-suppressive factors produced by CD8+ T-cells. Recombinant MIP-1-alpha induces a dose-dependent inhibition of different strains of HIV-1, HIV-2, and simian immunodeficiency virus (SIV). This chain is C-C motif chemokine 3 (CCL3), found in Bos taurus (Bovine).